The following is a 222-amino-acid chain: 25 kDa elongation factor 1-beta (222 aa).

The segment covering 75–94 has biased composition (low complexity); that stretch reads TSASAPAKQAPKKAASAPAK. The tract at residues 75–98 is disordered; sequence TSASAPAKQAPKKAASAPAKQADE.

Belongs to the EF-1-beta/EF-1-delta family. In terms of assembly, EF-1 is composed of 4 subunits: alpha, beta, delta, and gamma.

Functionally, EF-1-beta and EF-1-delta stimulate the exchange of GDP bound to EF-1-alpha to GTP. This chain is 25 kDa elongation factor 1-beta, found in Trypanosoma cruzi.